We begin with the raw amino-acid sequence, 232 residues long: Thiamine import ATP-binding protein ThiQ (232 aa).

The region spanning 2–230 is the ABC transporter domain; it reads LKLTDITWLY…KASASALLGI (229 aa). 32–39 serves as a coordination point for ATP; that stretch reads GPSGAGKS.

The protein belongs to the ABC transporter superfamily. Thiamine importer (TC 3.A.1.19.1) family. The complex is composed of two ATP-binding proteins (ThiQ), two transmembrane proteins (ThiP) and a solute-binding protein (ThiB).

It is found in the cell inner membrane. The enzyme catalyses thiamine(out) + ATP + H2O = thiamine(in) + ADP + phosphate + H(+). In terms of biological role, part of the ABC transporter complex ThiBPQ involved in thiamine import. Responsible for energy coupling to the transport system. The polypeptide is Thiamine import ATP-binding protein ThiQ (Escherichia coli O157:H7).